The primary structure comprises 214 residues: Cytochrome c biogenesis ATP-binding export protein CcmA (214 aa).

One can recognise an ABC transporter domain in the interval 8–212 (LYAADLACLK…PPTVLDLSEV (205 aa)). An ATP-binding site is contributed by 40–47 (GPNGFGKT).

This sequence belongs to the ABC transporter superfamily. CcmA exporter (TC 3.A.1.107) family. In terms of assembly, the complex is composed of two ATP-binding proteins (CcmA) and two transmembrane proteins (CcmB).

It localises to the cell inner membrane. It carries out the reaction heme b(in) + ATP + H2O = heme b(out) + ADP + phosphate + H(+). Part of the ABC transporter complex CcmAB involved in the biogenesis of c-type cytochromes; once thought to export heme, this seems not to be the case, but its exact role is uncertain. Responsible for energy coupling to the transport system. This is Cytochrome c biogenesis ATP-binding export protein CcmA from Aromatoleum aromaticum (strain DSM 19018 / LMG 30748 / EbN1) (Azoarcus sp. (strain EbN1)).